Consider the following 122-residue polypeptide: Prefoldin subunit 1 (122 aa).

Belongs to the prefoldin subunit beta family. Heterohexamer of two PFD-alpha type and four PFD-beta type subunits.

Functionally, binds specifically to cytosolic chaperonin (c-CPN) and transfers target proteins to it. Binds to nascent polypeptide chain and promotes folding in an environment in which there are many competing pathways for nonnative proteins. This is Prefoldin subunit 1 (pfdn1) from Tetraodon nigroviridis (Spotted green pufferfish).